Consider the following 648-residue polypeptide: Leucine-rich repeat transmembrane protein FLRT3 (648 aa).

Positions 1–28 (MSTETWNLFVAWAQLLLLFRISPQYVNA) are cleaved as a signal peptide. Residues 29–527 (KPCPSVCRCD…KEPYKNSSLP (499 aa)) are Extracellular-facing. An LRRNT domain is found at 30–62 (PCPSVCRCDGGFIYCNDRDLTSIPSGIPDDATT). Cystine bridges form between cysteine 31-cysteine 37 and cysteine 35-cysteine 44. LRR repeat units follow at residues 58 to 82 (DDAT…LRGL), 83 to 105 (DKVE…LPKN), 107 to 126 (KELH…ALSQ), 127 to 152 (IPSI…AFRD), 154 to 179 (IFLR…TIEE), 181 to 197 (RLDD…SLQD), 198 to 223 (LTNL…VFMN), 225 to 246 (INLT…NLPG), 247 to 269 (TNLR…AFAD), and 270 to 293 (LTQL…IFDD). Asparagine 226 carries an N-linked (GlcNAc...) asparagine glycan. The 52-residue stretch at 305–356 (NPWYCGCKMKWVRDWLQSLPSKVNVRGLMCQAPERVRGMTIKDLNKELFDCK) folds into the LRRCT domain. A disulfide bridge connects residues cysteine 309 and cysteine 334. In terms of domain architecture, Fibronectin type-III spans 409-503 (KIITIQVKSI…VCIETETAPL (95 aa)). The chain crosses the membrane as a helical span at residues 528–548 (LAAIIGGAVALVAITLLALVC). Residues 549-648 (WYVHRNGSLF…GIPDSDHSHS (100 aa)) lie on the Cytoplasmic side of the membrane. Residues 624 to 633 (NSHSESSSNR) show a composition bias toward low complexity. The interval 624-648 (NSHSESSSNRSYRDSGIPDSDHSHS) is disordered.

In terms of assembly, interacts with fgfr1 and fgfr4. Interacts with rnd1, cdh1 and pcdh8. Interacts (via extracellular domain) with unc5b and unc5d (via extracellular domain). Post-translationally, N-glycosylated. In terms of processing, proteolytic cleavage in the juxtamembrane region gives rise to a soluble ectodomain. Cleavage is probably effected by a metalloprotease.

It localises to the cell membrane. The protein localises to the endoplasmic reticulum membrane. It is found in the cell junction. The protein resides in the focal adhesion. Its subcellular location is the secreted. It localises to the cell projection. The protein localises to the axon. It is found in the growth cone membrane. Its function is as follows. Functions in cell-cell adhesion, cell migration and axon guidance, exerting an attractive or repulsive role depending on its interaction partners. Modulates cadherin-dependent cell-cell adhesion and cell sorting. Plays a role in the spatial organization of brain neurons. Plays a role in vascular development. Plays a role in cell-cell adhesion via its interaction with latrophilins that are expressed at the surface of adjacent cells. Mediates axon attraction towards cells expressing ntn1. mediates axon growth cone collapse and plays a repulsive role in neuron guidance via its interaction with unc-5 family members. Plays a role in the regulation of the density of glutamaergic synapses. Plays a role in signaling cascades downstream of fgfr1, and possibly also other fgfr family members. Plays a role in embryonic morphogenesis, but not in embryonic patterning. This chain is Leucine-rich repeat transmembrane protein FLRT3, found in Xenopus tropicalis (Western clawed frog).